The primary structure comprises 466 residues: MKKNENAHKKMWEGRFSEASSKLLEEFNASINFDKNLFEEDIAGSKAHAKMLGICGILKKDESEAIIKGLDEVLAEIRAGKFAFKIEDEDIHMAVEKRLSQIIGAELGGRLHTARSRNDQVALDFKFYVLKKNLEISSLIKELIATLTNLAKNHKDTLMPGYTHFQHAQPVSLSYHLLAYAFMFKRDFERFVSSYERNNLSPLGSAALAGTPHKIDRSIVASELGFADCTQNAMDSVSDRDYALEILFNISVFMTHASRLCEELILWSSQEFGFVSISDAYSTGSSIMPQKKNPDVAELIRGKTGRVNGNLVALLTTMKGLPLAYNKDMQEDKEGVFDSVATILSSATILNEMIKTAKFNEKNMLKATKTGHLSATDLADYLVREKNIPFRTAHFITGKAVAKAESLGLDLSELNKEQLKSVDENLDENAIKFLDLHASKEARTSKGGTANKSVEEQIQILDDWLK.

It belongs to the lyase 1 family. Argininosuccinate lyase subfamily.

The protein localises to the cytoplasm. The catalysed reaction is 2-(N(omega)-L-arginino)succinate = fumarate + L-arginine. It functions in the pathway amino-acid biosynthesis; L-arginine biosynthesis; L-arginine from L-ornithine and carbamoyl phosphate: step 3/3. The polypeptide is Argininosuccinate lyase (Campylobacter concisus (strain 13826)).